The primary structure comprises 880 residues: Pentatricopeptide repeat-containing protein At3g07290, mitochondrial (880 aa).

Residues 1–89 constitute a mitochondrion transit peptide; that stretch reads MLLIHIRSTR…RSDNDICVRF (89 aa). 19 PPR repeats span residues 159 to 193, 194 to 228, 229 to 259, 265 to 299, 300 to 334, 335 to 369, 370 to 404, 405 to 439, 440 to 474, 475 to 509, 510 to 544, 545 to 579, 580 to 614, 615 to 649, 650 to 684, 685 to 721, 738 to 768, 772 to 806, and 807 to 842; these read NYPCYSSLLMSLAKLDLGFLAYVTYRRMEADGFVV, GMIDYRTIVNALCKNGYTEAAEMFMSKILKIGFVL, DSHIGTSLLLGFCRGLNLRDALKVFDVMSKE, NSVSYSILIHGLCEVGRLEEAFGLKDQMGEKGCQP, STRTYTVLIKALCDRGLIDKAFNLFDEMIPRGCKP, NVHTYTVLIDGLCRDGKIEEANGVCRKMVKDRIFP, SVITYNALINGYCKDGRVVPAFELLTVMEKRACKP, NVRTFNELMEGLCRVGKPYKAVHLLKRMLDNGLSP, DIVSYNVLIDGLCREGHMNTAYKLLSSMNCFDIEP, DCLTFTAIINAFCKQGKADVASAFLGLMLRKGISL, DEVTGTTLIDGVCKVGKTRDALFILETLVKMRILT, TPHSLNVILDMLSKGCKVKEELAMLGKINKLGLVP, SVVTYTTLVDGLIRSGDITGSFRILELMKLSGCLP, NVYPYTIIINGLCQFGRVEEAEKLLSAMQDSGVSP, NHVTYTVMVKGYVNNGKLDRALETVRAMVERGYEL, NDRIYSSLLQGFVLSQKGIDNSEESTVSDIALRETDP, ISGLCIFLVTRLCKEGRTDESNDLVQNVLER, LEKAMDIIMESYCSKKKHTKCMELITLVLKSGFVP, and SFKSFCLVIQGLKKEGDAERARELVMELLTSNGVVE.

The protein belongs to the PPR family. P subfamily.

The protein localises to the mitochondrion. This chain is Pentatricopeptide repeat-containing protein At3g07290, mitochondrial, found in Arabidopsis thaliana (Mouse-ear cress).